Consider the following 396-residue polypeptide: Tyrosine--tRNA ligase (396 aa).

An L-tyrosine-binding site is contributed by tyrosine 36. A 'HIGH' region motif is present at residues 41-50 (PTANSLHIGN). L-tyrosine-binding residues include tyrosine 165 and glutamine 169. Residues 225-229 (KMGKT) carry the 'KMSKS' region motif. Lysine 228 contributes to the ATP binding site. An S4 RNA-binding domain is found at 331-394 (TNLIDYLVET…KKSFLTIKTV (64 aa)).

It belongs to the class-I aminoacyl-tRNA synthetase family. TyrS type 1 subfamily. In terms of assembly, homodimer.

It localises to the cytoplasm. It carries out the reaction tRNA(Tyr) + L-tyrosine + ATP = L-tyrosyl-tRNA(Tyr) + AMP + diphosphate + H(+). Catalyzes the attachment of tyrosine to tRNA(Tyr) in a two-step reaction: tyrosine is first activated by ATP to form Tyr-AMP and then transferred to the acceptor end of tRNA(Tyr). The polypeptide is Tyrosine--tRNA ligase (Mycoplasma genitalium (strain ATCC 33530 / DSM 19775 / NCTC 10195 / G37) (Mycoplasmoides genitalium)).